Here is a 429-residue protein sequence, read N- to C-terminus: Aspartate--tRNA(Asp/Asn) ligase (429 aa).

Glu-166 is a binding site for L-aspartate. An aspartate region spans residues 188 to 191; sequence QLYK. An L-aspartate-binding site is contributed by Arg-210. ATP is bound by residues 210–212, 218–220, and Glu-352; these read RAE and RHL. Glu-352 and Ser-355 together coordinate Mg(2+). 2 residues coordinate L-aspartate: Ser-355 and Arg-359. ATP is bound at residue 400–403; sequence GIER.

The protein belongs to the class-II aminoacyl-tRNA synthetase family. Type 2 subfamily. In terms of assembly, homodimer. Mg(2+) serves as cofactor.

The protein resides in the cytoplasm. The catalysed reaction is tRNA(Asx) + L-aspartate + ATP = L-aspartyl-tRNA(Asx) + AMP + diphosphate. In terms of biological role, aspartyl-tRNA synthetase with relaxed tRNA specificity since it is able to aspartylate not only its cognate tRNA(Asp) but also tRNA(Asn). Reaction proceeds in two steps: L-aspartate is first activated by ATP to form Asp-AMP and then transferred to the acceptor end of tRNA(Asp/Asn). The sequence is that of Aspartate--tRNA(Asp/Asn) ligase from Methanoculleus marisnigri (strain ATCC 35101 / DSM 1498 / JR1).